The primary structure comprises 81 residues: Cytochrome b559 subunit alpha (81 aa).

A helical membrane pass occupies residues Val21–Trp35. Residue His23 coordinates heme.

The protein belongs to the PsbE/PsbF family. As to quaternary structure, heterodimer of an alpha subunit and a beta subunit. PSII is composed of 1 copy each of membrane proteins PsbA, PsbB, PsbC, PsbD, PsbE, PsbF, PsbH, PsbI, PsbJ, PsbK, PsbL, PsbM, PsbT, PsbX, PsbY, PsbZ, Psb30/Ycf12, peripheral proteins PsbO, CyanoQ (PsbQ), PsbU, PsbV and a large number of cofactors. It forms dimeric complexes. Heme b is required as a cofactor.

The protein resides in the cellular thylakoid membrane. Its function is as follows. This b-type cytochrome is tightly associated with the reaction center of photosystem II (PSII). PSII is a light-driven water:plastoquinone oxidoreductase that uses light energy to abstract electrons from H(2)O, generating O(2) and a proton gradient subsequently used for ATP formation. It consists of a core antenna complex that captures photons, and an electron transfer chain that converts photonic excitation into a charge separation. This chain is Cytochrome b559 subunit alpha, found in Picosynechococcus sp. (strain ATCC 27264 / PCC 7002 / PR-6) (Agmenellum quadruplicatum).